The sequence spans 126 residues: Membrane-anchored ubiquitin-fold protein 2 (126 aa).

Positions 14 to 79 (VEVRFRLDDG…VLENNRTLAE (66 aa)) constitute a Ubiquitin-like domain. The residue at position 123 (Cys123) is a Cysteine methyl ester. Cys123 is lipidated: S-geranylgeranyl cysteine. A propeptide spans 124-126 (TIL) (removed in mature form).

It is found in the cell membrane. Functionally, may serve as docking site to facilitate the association of other proteins to the plasma membrane. The sequence is that of Membrane-anchored ubiquitin-fold protein 2 (MUB2) from Oryza sativa subsp. japonica (Rice).